The primary structure comprises 362 residues: Chorismate synthase (362 aa).

Arg-46 contributes to the NADP(+) binding site. Residues 122–124 (RSS), 238–239 (NA), Gly-278, 293–297 (KPTPS), and Arg-319 contribute to the FMN site.

It belongs to the chorismate synthase family. As to quaternary structure, homotetramer. FMNH2 is required as a cofactor.

It carries out the reaction 5-O-(1-carboxyvinyl)-3-phosphoshikimate = chorismate + phosphate. It functions in the pathway metabolic intermediate biosynthesis; chorismate biosynthesis; chorismate from D-erythrose 4-phosphate and phosphoenolpyruvate: step 7/7. Its function is as follows. Catalyzes the anti-1,4-elimination of the C-3 phosphate and the C-6 proR hydrogen from 5-enolpyruvylshikimate-3-phosphate (EPSP) to yield chorismate, which is the branch point compound that serves as the starting substrate for the three terminal pathways of aromatic amino acid biosynthesis. This reaction introduces a second double bond into the aromatic ring system. The sequence is that of Chorismate synthase from Campylobacter jejuni subsp. jejuni serotype O:6 (strain 81116 / NCTC 11828).